Here is a 736-residue protein sequence, read N- to C-terminus: Phosphoribosylformylglycinamidine synthase subunit PurL (736 aa).

Histidine 49 is an active-site residue. Residues tyrosine 52 and lysine 91 each coordinate ATP. Glutamate 93 contacts Mg(2+). Substrate-binding positions include 94 to 97 (SHNH) and arginine 116. The active-site Proton acceptor is the histidine 95. Aspartate 117 provides a ligand contact to Mg(2+). Substrate is bound at residue glutamine 240. Aspartate 268 provides a ligand contact to Mg(2+). 312 to 314 (ESQ) serves as a coordination point for substrate. Aspartate 493 and glycine 530 together coordinate ATP. Asparagine 531 is a Mg(2+) binding site. Substrate is bound at residue serine 533.

It belongs to the FGAMS family. Monomer. Part of the FGAM synthase complex composed of 1 PurL, 1 PurQ and 2 PurS subunits.

It is found in the cytoplasm. It catalyses the reaction N(2)-formyl-N(1)-(5-phospho-beta-D-ribosyl)glycinamide + L-glutamine + ATP + H2O = 2-formamido-N(1)-(5-O-phospho-beta-D-ribosyl)acetamidine + L-glutamate + ADP + phosphate + H(+). It participates in purine metabolism; IMP biosynthesis via de novo pathway; 5-amino-1-(5-phospho-D-ribosyl)imidazole from N(2)-formyl-N(1)-(5-phospho-D-ribosyl)glycinamide: step 1/2. Part of the phosphoribosylformylglycinamidine synthase complex involved in the purines biosynthetic pathway. Catalyzes the ATP-dependent conversion of formylglycinamide ribonucleotide (FGAR) and glutamine to yield formylglycinamidine ribonucleotide (FGAM) and glutamate. The FGAM synthase complex is composed of three subunits. PurQ produces an ammonia molecule by converting glutamine to glutamate. PurL transfers the ammonia molecule to FGAR to form FGAM in an ATP-dependent manner. PurS interacts with PurQ and PurL and is thought to assist in the transfer of the ammonia molecule from PurQ to PurL. This chain is Phosphoribosylformylglycinamidine synthase subunit PurL, found in Rhodopseudomonas palustris (strain HaA2).